Here is a 286-residue protein sequence, read N- to C-terminus: Phosphatidylglycerol--prolipoprotein diacylglyceryl transferase (286 aa).

A run of 7 helical transmembrane segments spans residues 29–49 (IHWY…VGTY), 66–86 (LVFY…VFFY), 101–121 (VWEG…AMML), 130–150 (FLDL…LGRI), 181–201 (PSQL…LFWF), 209–229 (AAVA…VEFV), and 250–270 (LSLP…RHPA). An a 1,2-diacyl-sn-glycero-3-phospho-(1'-sn-glycerol)-binding site is contributed by R149.

Belongs to the Lgt family.

It localises to the cell inner membrane. The enzyme catalyses L-cysteinyl-[prolipoprotein] + a 1,2-diacyl-sn-glycero-3-phospho-(1'-sn-glycerol) = an S-1,2-diacyl-sn-glyceryl-L-cysteinyl-[prolipoprotein] + sn-glycerol 1-phosphate + H(+). It functions in the pathway protein modification; lipoprotein biosynthesis (diacylglyceryl transfer). In terms of biological role, catalyzes the transfer of the diacylglyceryl group from phosphatidylglycerol to the sulfhydryl group of the N-terminal cysteine of a prolipoprotein, the first step in the formation of mature lipoproteins. This Teredinibacter turnerae (strain ATCC 39867 / T7901) protein is Phosphatidylglycerol--prolipoprotein diacylglyceryl transferase.